The primary structure comprises 226 residues: Cytidylate kinase (226 aa).

Residue 12–20 coordinates ATP; it reads GPSGAGKGT.

The protein belongs to the cytidylate kinase family. Type 1 subfamily.

Its subcellular location is the cytoplasm. The catalysed reaction is CMP + ATP = CDP + ADP. It carries out the reaction dCMP + ATP = dCDP + ADP. The chain is Cytidylate kinase from Xanthomonas campestris pv. campestris (strain B100).